The following is a 31-amino-acid chain: Cytochrome b6-f complex subunit 6 (31 aa).

A helical transmembrane segment spans residues 3 to 23; it reads ALIGYILLMTLMFSLAAGLYF.

Belongs to the PetL family. The 4 large subunits of the cytochrome b6-f complex are cytochrome b6, subunit IV (17 kDa polypeptide, PetD), cytochrome f and the Rieske protein, while the 4 small subunits are PetG, PetL, PetM and PetN. The complex functions as a dimer.

It is found in the plastid. The protein resides in the chloroplast thylakoid membrane. In terms of biological role, component of the cytochrome b6-f complex, which mediates electron transfer between photosystem II (PSII) and photosystem I (PSI), cyclic electron flow around PSI, and state transitions. PetL is important for photoautotrophic growth as well as for electron transfer efficiency and stability of the cytochrome b6-f complex. This is Cytochrome b6-f complex subunit 6 from Emiliania huxleyi (Coccolithophore).